Reading from the N-terminus, the 298-residue chain is 3-deoxy-manno-octulosonate cytidylyltransferase (298 aa).

Residues 22–42 traverse the membrane as a helical segment; sequence VWVLHGLALGAAAAAAAVAYL.

This sequence belongs to the KdsB family. Requires Mg(2+) as cofactor. Ubiquitous.

Its subcellular location is the membrane. The catalysed reaction is 3-deoxy-alpha-D-manno-oct-2-ulosonate + CTP = CMP-3-deoxy-beta-D-manno-octulosonate + diphosphate. It participates in nucleotide-sugar biosynthesis; CMP-3-deoxy-D-manno-octulosonate biosynthesis; CMP-3-deoxy-D-manno-octulosonate from 3-deoxy-D-manno-octulosonate and CTP: step 1/1. Its function is as follows. Catalyzes the production of the sugar nucleotide CMP-3-deoxy-D-manno-octulosonate (CMP-KDO). CTP is the preferred nucleotide donor, and it can partially be replaced with UTP but not with ATP. Activates KDO during the biosynthesis of rhamnogalacturonan II (RG-II), a structurally complex pectic polysaccharide of the primary cell wall. RG-II is essential for the cell wall integrity of rapidly growing tissues and pollen tube growth and elongation. This is 3-deoxy-manno-octulosonate cytidylyltransferase from Zea mays (Maize).